Consider the following 256-residue polypeptide: Pimeloyl-[acyl-carrier protein] methyl ester esterase (256 aa).

Residues 15-242 enclose the AB hydrolase-1 domain; it reads HLVLLHGWGL…AAHAPFISHP (228 aa). Residues W22, 82–83, and 143–147 contribute to the substrate site; these read SL and FLALQ. The Nucleophile role is filled by S82. Catalysis depends on residues D207 and H235. H235 serves as a coordination point for substrate.

It belongs to the AB hydrolase superfamily. Carboxylesterase BioH family. Monomer.

It is found in the cytoplasm. It catalyses the reaction 6-carboxyhexanoyl-[ACP] methyl ester + H2O = 6-carboxyhexanoyl-[ACP] + methanol + H(+). Its pathway is cofactor biosynthesis; biotin biosynthesis. The physiological role of BioH is to remove the methyl group introduced by BioC when the pimeloyl moiety is complete. It allows to synthesize pimeloyl-ACP via the fatty acid synthetic pathway through the hydrolysis of the ester bonds of pimeloyl-ACP esters. This Salmonella agona (strain SL483) protein is Pimeloyl-[acyl-carrier protein] methyl ester esterase.